The following is a 711-amino-acid chain: Putative membrane protein IgaA homolog (711 aa).

Met-1 is a topological domain (periplasmic). A helical transmembrane segment spans residues 2–22; that stretch reads STIVIFLAALLACSLLAGWLI. Over 23–204 the chain is Cytoplasmic; the sequence is KVRSRRRQLP…YALSRPRGLR (182 aa). 2 helical membrane-spanning segments follow: residues 205 to 225 and 226 to 246; these read EALLIVASFLMFFFCLITPDV and FVPWLAGGALLLLGAGLWGLF. The Cytoplasmic portion of the chain corresponds to 247-339; it reads APPAKSSLRE…KNFPLQHWLR (93 aa). A helical transmembrane segment spans residues 340 to 360; that stretch reads STIIAAGSLLVLFMLLFWIPL. Residues 361–655 are Periplasmic-facing; that stretch reads DMPLKFTLSW…IPDRSGLWRY (295 aa). Residues 656–676 traverse the membrane as a helical segment; that stretch reads LSTTLLLLTMLGSAIYNGVQA. Residues 677–711 lie on the Cytoplasmic side of the membrane; sequence WRRYQRHRTRMMEIQAYYESCLNPQLITPSESLIE.

This sequence belongs to the IgaA family.

The protein resides in the cell inner membrane. The protein is Putative membrane protein IgaA homolog (yrfF) of Escherichia coli (strain K12).